Reading from the N-terminus, the 1201-residue chain is ATP-dependent helicase/deoxyribonuclease subunit B (1201 aa).

The protein belongs to the helicase family. AddB/RexB type 2 subfamily. As to quaternary structure, heterodimer of AddA and RexB. Requires Mg(2+) as cofactor.

In terms of biological role, the heterodimer acts as both an ATP-dependent DNA helicase and an ATP-dependent, dual-direction single-stranded exonuclease. Recognizes the chi site generating a DNA molecule suitable for the initiation of homologous recombination. This subunit has 5' -&gt; 3' nuclease activity but not helicase activity. In Levilactobacillus brevis (strain ATCC 367 / BCRC 12310 / CIP 105137 / JCM 1170 / LMG 11437 / NCIMB 947 / NCTC 947) (Lactobacillus brevis), this protein is ATP-dependent helicase/deoxyribonuclease subunit B.